We begin with the raw amino-acid sequence, 346 residues long: Holliday junction branch migration complex subunit RuvB (346 aa).

The segment at M1–Y181 is large ATPase domain (RuvB-L). ATP is bound by residues L20, R21, G62, K65, T66, T67, E128–F130, R171, Y181, and R218. Residue T66 participates in Mg(2+) binding. The interval T182 to E252 is small ATPAse domain (RuvB-S). Residues N255–E346 form a head domain (RuvB-H) region. Residues R291, R310, and R315 each contribute to the DNA site.

This sequence belongs to the RuvB family. Homohexamer. Forms an RuvA(8)-RuvB(12)-Holliday junction (HJ) complex. HJ DNA is sandwiched between 2 RuvA tetramers; dsDNA enters through RuvA and exits via RuvB. An RuvB hexamer assembles on each DNA strand where it exits the tetramer. Each RuvB hexamer is contacted by two RuvA subunits (via domain III) on 2 adjacent RuvB subunits; this complex drives branch migration. In the full resolvosome a probable DNA-RuvA(4)-RuvB(12)-RuvC(2) complex forms which resolves the HJ.

It is found in the cytoplasm. The catalysed reaction is ATP + H2O = ADP + phosphate + H(+). The RuvA-RuvB-RuvC complex processes Holliday junction (HJ) DNA during genetic recombination and DNA repair, while the RuvA-RuvB complex plays an important role in the rescue of blocked DNA replication forks via replication fork reversal (RFR). RuvA specifically binds to HJ cruciform DNA, conferring on it an open structure. The RuvB hexamer acts as an ATP-dependent pump, pulling dsDNA into and through the RuvAB complex. RuvB forms 2 homohexamers on either side of HJ DNA bound by 1 or 2 RuvA tetramers; 4 subunits per hexamer contact DNA at a time. Coordinated motions by a converter formed by DNA-disengaged RuvB subunits stimulates ATP hydrolysis and nucleotide exchange. Immobilization of the converter enables RuvB to convert the ATP-contained energy into a lever motion, pulling 2 nucleotides of DNA out of the RuvA tetramer per ATP hydrolyzed, thus driving DNA branch migration. The RuvB motors rotate together with the DNA substrate, which together with the progressing nucleotide cycle form the mechanistic basis for DNA recombination by continuous HJ branch migration. Branch migration allows RuvC to scan DNA until it finds its consensus sequence, where it cleaves and resolves cruciform DNA. The chain is Holliday junction branch migration complex subunit RuvB from Brucella suis (strain ATCC 23445 / NCTC 10510).